Reading from the N-terminus, the 430-residue chain is Mitochondrial distribution and morphology protein 12 (430 aa).

The 430-residue stretch at 1 to 430 (MSIDIDWERA…VYPSFWTFLI (430 aa)) folds into the SMP-LTD domain. Disordered stretches follow at residues 61–117 (DLSD…YESN), 177–276 (TPLG…RMRE), and 352–377 (MGPE…KPSS). Positions 69-82 (FYEDDDENFSDSSE) are enriched in acidic residues. A compositionally biased stretch (basic and acidic residues) spans 85 to 96 (SPTREPVDRYGN). Polar residues-rich tracts occupy residues 211-233 (SAQS…SMSI) and 241-251 (ASQGMPNNQGQ). Residues 265 to 276 (PLDDTPPRRMRE) show a composition bias toward basic and acidic residues.

It belongs to the MDM12 family. In terms of assembly, component of the ER-mitochondria encounter structure (ERMES) or MDM complex, composed of MMM1, MDM10, MDM12 and MDM34. An MMM1 homodimer associates with one molecule of MDM12 on each side in a pairwise head-to-tail manner, and the SMP-LTD domains of MMM1 and MDM12 generate a continuous hydrophobic tunnel for phospholipid trafficking.

Its subcellular location is the mitochondrion outer membrane. It localises to the endoplasmic reticulum membrane. Component of the ERMES/MDM complex, which serves as a molecular tether to connect the endoplasmic reticulum (ER) and mitochondria. Components of this complex are involved in the control of mitochondrial shape and protein biogenesis, and function in nonvesicular lipid trafficking between the ER and mitochondria. MDM12 is required for the interaction of the ER-resident membrane protein MMM1 and the outer mitochondrial membrane-resident beta-barrel protein MDM10. The MDM12-MMM1 subcomplex functions in the major beta-barrel assembly pathway that is responsible for biogenesis of all mitochondrial outer membrane beta-barrel proteins, and acts in a late step after the SAM complex. The MDM10-MDM12-MMM1 subcomplex further acts in the TOM40-specific pathway after the action of the MDM12-MMM1 complex. Essential for establishing and maintaining the structure of mitochondria and maintenance of mtDNA nucleoids. The chain is Mitochondrial distribution and morphology protein 12 from Ajellomyces capsulatus (strain G186AR / H82 / ATCC MYA-2454 / RMSCC 2432) (Darling's disease fungus).